A 134-amino-acid chain; its full sequence is Calvin cycle protein CP12-3, chloroplastic (134 aa).

Residues 1-21 (MISGSATASHGRVLLPSQRER) are disordered. Residues 1–42 (MISGSATASHGRVLLPSQRERRPVSTGSNILRFRETVPRQFS) constitute a chloroplast transit peptide. 2 disulfide bridges follow: C78/C87 and C120/C129.

The protein belongs to the CP12 family. Monomer. Component of a complex that contains two dimers of PRK, two tetramers of GAPDH and CP12. CP12 associates with GAPDH, causing its conformation to change. This GAPDH/CP12 complex binds PRK to form a half-complex (one unit). This unit probably dimerizes due partially to interactions between the enzymes of each unit. Contains two disulfide bonds; only the oxidized protein, with two disulfide bonds, is active in complex formation. The C-terminal disulfide is involved in the interaction with GAPDH and the N-terminal disulfide mediates the binding of PRK with this binary complex. In terms of tissue distribution, mostly expressed, at low levels, in stems and, to a lesser extent, in leaves and roots.

The protein resides in the plastid. It localises to the chloroplast. In terms of biological role, acts as a linker essential in the assembly of a core complex of PRK/GAPDH. Coordinates the reversible inactivation of chloroplast enzymes GAPDH and PRK during darkness in photosynthetic tissues. This chain is Calvin cycle protein CP12-3, chloroplastic (CP12-3), found in Arabidopsis thaliana (Mouse-ear cress).